The following is a 245-amino-acid chain: tRNA (guanine-N(1)-)-methyltransferase (245 aa).

Residues Gly-111 and 131 to 136 (IGDYVL) each bind S-adenosyl-L-methionine.

This sequence belongs to the RNA methyltransferase TrmD family. In terms of assembly, homodimer.

Its subcellular location is the cytoplasm. It catalyses the reaction guanosine(37) in tRNA + S-adenosyl-L-methionine = N(1)-methylguanosine(37) in tRNA + S-adenosyl-L-homocysteine + H(+). Its function is as follows. Specifically methylates guanosine-37 in various tRNAs. This chain is tRNA (guanine-N(1)-)-methyltransferase, found in Caldicellulosiruptor saccharolyticus (strain ATCC 43494 / DSM 8903 / Tp8T 6331).